The primary structure comprises 298 residues: Protease HtpX homolog (298 aa).

Transmembrane regions (helical) follow at residues 14 to 34 (VVLL…AGYL) and 39 to 59 (YAMG…SMIF). Histidine 143 provides a ligand contact to Zn(2+). The active site involves glutamate 144. Histidine 147 contributes to the Zn(2+) binding site. Helical transmembrane passes span 158 to 178 (IAVA…RMLW) and 197 to 217 (IITL…ASLI). Glutamate 226 provides a ligand contact to Zn(2+).

This sequence belongs to the peptidase M48B family. The cofactor is Zn(2+).

The protein localises to the cell membrane. In Streptococcus pyogenes serotype M3 (strain SSI-1), this protein is Protease HtpX homolog.